Consider the following 655-residue polypeptide: Chaperone protein DnaK 3 (655 aa).

Thr-197 carries the post-translational modification Phosphothreonine; by autocatalysis.

The protein belongs to the heat shock protein 70 family.

Its function is as follows. Acts as a chaperone. The protein is Chaperone protein DnaK 3 of Synechococcus sp. (strain ATCC 27144 / PCC 6301 / SAUG 1402/1) (Anacystis nidulans).